We begin with the raw amino-acid sequence, 468 residues long: Tyrosine phenol-lyase (468 aa).

At Lys-260 the chain carries N6-(pyridoxal phosphate)lysine.

The protein belongs to the beta-eliminating lyase family. In terms of assembly, homotetramer. The cofactor is pyridoxal 5'-phosphate.

The catalysed reaction is L-tyrosine + H2O = phenol + pyruvate + NH4(+). The chain is Tyrosine phenol-lyase from Lacrimispora saccharolytica (strain ATCC 35040 / DSM 2544 / NRCC 2533 / WM1) (Clostridium saccharolyticum).